The following is a 718-amino-acid chain: Sodium/myo-inositol cotransporter (718 aa).

Residues 1-9 (MRAVLETAD) are Extracellular-facing. A helical membrane pass occupies residues 10-29 (IAIVALYFILVMCIGFFAMW). Topologically, residues 30–38 (KSNRSTVSG) are cytoplasmic. Residues 39 to 57 (YFLAGRSMTWVAIGASLFV) form a helical membrane-spanning segment. Residues 58–86 (SNIGSEHFIGLAGSGAASGFAVGAWEFNA) are Extracellular-facing. A helical transmembrane segment spans residues 87–110 (LLLLQLLGWVFIPIYIRSGVYTMP). Topologically, residues 111 to 123 (EYLSKRFGGHRIQ) are cytoplasmic. The chain crosses the membrane as a helical span at residues 124 to 144 (VYFAALSLILYIFTKLSVDLY). Residues 145–157 (SGALFIQESLGWN) are Extracellular-facing. Residues 158–183 (LYVSVILLIGMTALLTVTGGLVAVIY) traverse the membrane as a helical segment. At 184-186 (TDT) the chain is on the cytoplasmic side. Residues 187–205 (LQALLMIVGALTLMIISMM) traverse the membrane as a helical segment. Residues 206-303 (EIGGFEEVKR…HAKGSTLMAG (98 aa)) are Extracellular-facing. N232 carries an N-linked (GlcNAc...) asparagine glycan. A helical membrane pass occupies residues 304-324 (FLKLLPMFIIVVPGMISRILF). The Cytoplasmic portion of the chain corresponds to 325 to 353 (ADDIACINPEHCMQVCGSRAGCSNIAYPR). Residues 354-376 (LVMKLVPVGLRGLMMAVMIAALM) form a helical membrane-spanning segment. The Extracellular segment spans residues 377-406 (SDLDSIFNSASTIFTLDVYKLIRRSASSRE). A helical transmembrane segment spans residues 407–430 (LMIVGRIFVAFMVVISIAWVPIIV). The Cytoplasmic portion of the chain corresponds to 431 to 443 (EMQGGQMYLYIQE). A helical membrane pass occupies residues 444-462 (VADYLTPPVAALFLLAIFW). The Extracellular portion of the chain corresponds to 463-510 (KRCNEQGAFYGGMAGFVLGAVRLTLAFAYRAPECDQPDNRPGFIKDIH). Residues 511–532 (YMYVATALFWVTGLITVIVSLL) traverse the membrane as a helical segment. Over 533 to 695 (TPPPTKEQIR…QMLEEPPQVK (163 aa)) the chain is Cytoplasmic. Phosphoserine is present on residues S594 and S632. Residues 696 to 716 (LILNIGLFAVCSLGIFMFVYF) traverse the membrane as a helical segment. The Extracellular portion of the chain corresponds to 717–718 (SL).

It belongs to the sodium:solute symporter (SSF) (TC 2.A.21) family. As to quaternary structure, interacts with KCNQ2 (via the pore module). Interacts with KCNQ1; this interaction is direct. Forms coregulatory complexes with ion channels KCNQ2-KCNQ3 and KCNQ1-KCNE2. As to expression, kidney cortex and medulla.

It is found in the apical cell membrane. The protein resides in the basolateral cell membrane. The catalysed reaction is myo-inositol(out) + 2 Na(+)(out) = myo-inositol(in) + 2 Na(+)(in). It catalyses the reaction scyllo-inositol(out) + 2 Na(+)(out) = scyllo-inositol(in) + 2 Na(+)(in). Inhibited by phlorizin and phloretin. Functionally, electrogenic Na(+)-coupled sugar symporter that actively transports myo-inositol and its stereoisomer scyllo-inositol across the plasma membrane, with a Na(+) to sugar coupling ratio of 2:1. Maintains myo-inositol concentration gradient that defines cell volume and fluid balance during osmotic stress, in particular in the fetoplacental unit and central nervous system. Forms coregulatory complexes with voltage-gated K(+) ion channels, allosterically altering ion selectivity, voltage dependence and gating kinetics of the channel. In turn, K(+) efflux through the channel forms a local electrical gradient that modulates electrogenic Na(+)-coupled myo-inositol influx through the transporter. Associates with KCNQ1-KCNE2 channel in the apical membrane of choroid plexus epithelium and regulates the myo-inositol gradient between blood and cerebrospinal fluid with an impact on neuron excitability. Associates with KCNQ2-KCNQ3 channel altering ion selectivity, increasing Na(+) and Cs(+) permeation relative to K(+) permeation. Provides myo-inositol precursor for biosynthesis of phosphoinositides such as PI(4,5)P2, thus indirectly affecting the activity of phosphoinositide-dependent ion channels and Ca(2+) signaling upon osmotic stress. Has very low affinity for sugars such as L-fucose and L-xylose, with an affinity about three orders of magnitude lower than myo-inositol. This Canis lupus familiaris (Dog) protein is Sodium/myo-inositol cotransporter (SLC5A3).